The chain runs to 523 residues: Tyrosine/DOPA decarboxylase 5 (523 aa).

Over residues 1–19 (MGSLPTDNLESMSICSQNP) the composition is skewed to polar residues. Disordered regions lie at residues 1-20 (MGSL…QNPL) and 47-66 (SRSQ…APNH). Lys-321 is subject to N6-(pyridoxal phosphate)lysine.

The protein belongs to the group II decarboxylase family. In terms of assembly, homodimer. Requires pyridoxal 5'-phosphate as cofactor. As to expression, roots.

It carries out the reaction L-tyrosine + H(+) = tyramine + CO2. The catalysed reaction is L-dopa + H(+) = dopamine + CO2. The enzyme catalyses 5-hydroxy-L-tryptophan + H(+) = serotonin + CO2. In terms of biological role, may play an important role in providing precursors for alkaloid synthesis in the roots and germinating seedlings. In Papaver somniferum (Opium poppy), this protein is Tyrosine/DOPA decarboxylase 5 (TYDC5).